The chain runs to 219 residues: Non-specific lipid transfer protein GPI-anchored 25 (219 aa).

The N-terminal stretch at 1–22 (MATKITGVFILILTITFSSSSA) is a signal peptide. 4 disulfides stabilise this stretch: cysteine 39–cysteine 85, cysteine 49–cysteine 68, cysteine 69–cysteine 110, and cysteine 83–cysteine 123. The N-linked (GlcNAc...) asparagine glycan is linked to asparagine 59. Asparagine 148 carries an N-linked (GlcNAc...) asparagine glycan. A disordered region spans residues 152–181 (SPQSVDLAPEVSPSSDLFSPETATLAPPPP). Serine 192 is lipidated: GPI-anchor amidated serine. The propeptide at 193 to 219 (SDSLKIRNFWFPSTIIMTFATSILARI) is removed in mature form.

The protein belongs to the plant LTP family.

It is found in the cell membrane. In terms of biological role, probable lipid transfer protein. In Arabidopsis thaliana (Mouse-ear cress), this protein is Non-specific lipid transfer protein GPI-anchored 25.